A 290-amino-acid polypeptide reads, in one-letter code: Transcription factor HES-1 (290 aa).

The tract at residues 1 to 47 is disordered; the sequence is MPADTGMEKPTASPIAGAPASASHTPDKPRSASEHRKSSKPIMEKRR. The segment covering 10–23 has biased composition (low complexity); that stretch reads PTASPIAGAPASAS. Basic and acidic residues predominate over residues 25–36; it reads TPDKPRSASEHR. The region spanning 35–92 is the bHLH domain; sequence HRKSSKPIMEKRRRARINESLGQLKMLILDALKKDSSRHSKLEKADILEMTVKHLRNL. In terms of domain architecture, Orange spans 111–144; that stretch reads YRAGFNECMNEVTRFLSTCEGVNADVRARLLGHL. A WRPW motif motif is present at residues 287–290; sequence WRPW.

As to quaternary structure, transcription repression requires formation of a complex with a corepressor protein of the Groucho/TLE family.

Its subcellular location is the nucleus. In terms of biological role, transcriptional repressor of genes that require a bHLH protein for their transcription. May act as a negative regulator of myogenesis by inhibiting the functions of MYOD1 and ASH1. This chain is Transcription factor HES-1 (HES1), found in Gallus gallus (Chicken).